A 1413-amino-acid polypeptide reads, in one-letter code: MDGHGCSSSQAMCRGAFGNVATRPAPFPRSAAPFVVAGESLGALRDKCHAYFYDSFSSFTGVDCCYGSRFDILLGSYFNTITLSHFLETGLSIACICVKFPELKYAEDGIVQFVVANPMIARSDCEVPSRPSYTYVTKKWSRTTLTSSLSICGPALELLTGDALDGTEIANFSRARAMNQLARDLKLTLDSFERGTVHHVLGILIRKAPPMPLLQPLMAAMARERDMNVVARANILSAMKNAVREHLFFMDKESRGDPQDIARGLLSLINCTLPSVSDTRVTHVGPGGRPIDGVLVTTEAVKGLVTQALTLTASEATVPAMYGELSISGTNLVTALLMGKAIRNFNEAARNLLNFADGNVDVSDFPDIPQDGEDAPRTMSVNMSLVTVGDSLVAVEALERIYARTGVPYPLAGNVDLTFFFPLGLFKPHKDRYAIGGLILPDTAEAAVDGRLFPPTEMFFFDKDEQLRSVSFESSLGTVAHPIAHGIMETLQELSQEQWVQARPPAPMDFTIQRMSQQPPRAQMVEFLTAVATAVTAPHPSATLINRRSTDQFLSHTNPFLQLEVHPFYDVYRVAQDLQTPSDAALFAPVEPSTLAASRRLCNGDIPLPLSSADFRSSRGRQLAACGAMLSSQAAAAIETTLSDPNYPVAFYVIEACLHGDETLFLESQRLVAQCIESYWVSAGGLAFVNSFAMIMYITHNLSSLVNRNCHALYAEIVAVLNSMRAAVSRFTQSGDALLQHTQEELNHLLMDPAVFPPILYDCDPIIRVTGAYAARNITIRTLGERAPVVSTRDWPPQADFGAINITLNHGPPYTARGRADGGAHHDSEWTVLNKIFYYALLPALARGRCCSVGVEFEMVYNLINTTRLPANADDLAAPEANPLHVNNLAPDSFNALLHNSGVALVDAEALVAFIAAARLRQVAHTLPLRVSYSADPGFATIDSPNTAFTDGVLYNGLIMMNYPQYDATLVASRYFYALPVNGFYANRTIVEATHRGAVNLGEVPEDLPLVPTFLGAEAYRSIRAPSYMYCAKQCASGTASAGAVAYGLMAGYFKTSPVALTHQLKSGLHPGFALTVARQDRFYADQILFARRLSESYYMGAPTTESRAENNSLMIDIHQPRSHVDMGLGFTASRMPAKLNTVVTDMGSRSQNLFDARYPGQFRYLEVADFIASEITDDDSLAMPRARPPLMLPYEAPPLPPCLERGQRATCEFLITPVTADLKYFYGPANPRGRSSCVACMPHEDPSRDSVDRAMYDHTTPDAAFPSRATNNPWASQRFSLGDRMYNARRGFIVTSDFFSPLGKFMTPSRVEDKNRCLARLLRESATAVSSVTGNTEFQFVAPVGSNELITDPCAIFQEAYPILCASDKALFASYENPRKAVGTGARENHFAQYLIHDASPLSGVLKCNGKL.

This sequence belongs to the herpesviridae major capsid protein family. In terms of assembly, homomultimer. Makes the hexons and eleven out of twelve pentons. Interacts with triplex proteins 1/TRX1 and 2/TRX2; adjacent capsomers are linked together in groups of three by triplexes, heterotrimeric complexes composed of one molecule of TRX1 and two molecules of TRX2. Interacts with scaffold protein; this interaction allows efficient MCP transport to the host nucleus. Interacts with capsid vertex component 2/CVC2. Interacts with the small capsomere-interacting protein/SCP.

Its subcellular location is the virion. It localises to the host nucleus. Functionally, self-assembles to form an icosahedral capsid with a T=16 symmetry, about 200 nm in diameter, and consisting of 150 hexons and 12 pentons (total of 162 capsomers). Hexons form the edges and faces of the capsid and are each composed of six MCP molecules. In contrast, one penton is found at each of the 12 vertices. Eleven of the pentons are MCP pentamers, while the last vertex is occupied by the portal complex. The capsid is surrounded by a layer of proteinaceous material designated the tegument which, in turn, is enclosed in an envelope of host cell-derived lipids containing virus-encoded glycoproteins. The protein is Major capsid protein of Psittacid herpesvirus 1 (isolate Amazon parrot/-/97-0001/1997) (PsHV-1).